We begin with the raw amino-acid sequence, 150 residues long: Propanediol utilization protein PduV (150 aa).

Positions 1–42 (MKRIMLIGPSQCGKTSLTQCMRGEALHYQKTQAIVWSPTTID) are targets protein to the BMC. A GTP-binding site is contributed by 8 to 15 (GPSQCGKT).

Belongs to the EutP/PduV family. Interacts with PduU, probably via the PduU beta-barrel which is predicted by modeling to be on the exterior of the BMC.

The protein localises to the bacterial microcompartment. Its pathway is polyol metabolism; 1,2-propanediol degradation. Its function is as follows. May play a role in the spatial distribution of the bacterial microcompartment (BMC) dedicated to 1,2-PD degradation, perhaps being involved in cytoskeleton dynamics; might bind GTP. This subunit is directly targeted to the BMC. Expression of a cosmid containing the full 21-gene pdu operon in E.coli allows E.coli to grow on 1,2-propanediol (1,2-PD) with the appearance of bacterial microcompartments (BMC) in its cytoplasm. Functionally, the 1,2-PD-specific bacterial microcompartment (BMC) concentrates low levels of 1,2-PD catabolic enzymes, concentrates volatile reaction intermediates thus enhancing pathway flux and keeps the level of toxic, mutagenic propionaldehyde low. This Citrobacter freundii protein is Propanediol utilization protein PduV.